Consider the following 358-residue polypeptide: MEPIGARLSLEAPGPAPFREAPPAEELPAPVVPCVQGGGDGGGASETPSPDAQLGDRPLSPKEEAAPQEQEELLECRRRCRARSFSLPADPILQAAKFLQQQQQQAVALGGEGAEDAQLGPGGCCAKCKKRVQFADTLGLSLASVKHFSEAEEPQVPPAVLSRLRSFPMRAEDLEQLGGLLAAAAVAAPLSAPPSRLRPLFQLPGPSAAAERLQRQRVCLERVQCSTASGAEVKGSGRVLSCPGPRAVTVRYTFTEWRSFLDVPAELQPEPLEPQQPEAPSGASEPGSGDAKKEPGAECFHFSLCLPPGLQPEDEEDADERGVAVHFAVCYRCAQGEYWDNNAGANYTLRYARPADAL.

The disordered stretch occupies residues 1–71 (MEPIGARLSL…KEEAAPQEQE (71 aa)). Over residues 11 to 29 (EAPGPAPFREAPPAEELPA) the composition is skewed to low complexity. Ser86 carries the post-translational modification Phosphoserine. In terms of domain architecture, CBM21 spans 210 to 350 (AERLQRQRVC…NNAGANYTLR (141 aa)). Low complexity predominate over residues 270–280 (EPLEPQQPEAP). Residues 270–295 (EPLEPQQPEAPSGASEPGSGDAKKEP) form a disordered region.

In terms of biological role, glycogen-targeting subunit for protein phosphatase 1 (PP1). Involved in the regulation of hepatic glycogenesis in a manner coupled to the fasting-feeding cycle and distinct from other glycogen-targeting subunits. In Homo sapiens (Human), this protein is Protein phosphatase 1 regulatory subunit 3G (PPP1R3G).